The primary structure comprises 155 residues: Putative pre-16S rRNA nuclease (155 aa).

It belongs to the YqgF nuclease family.

It localises to the cytoplasm. Could be a nuclease involved in processing of the 5'-end of pre-16S rRNA. The sequence is that of Putative pre-16S rRNA nuclease from Wolbachia pipientis wMel.